The sequence spans 333 residues: Beta-ketoacyl-[acyl-carrier-protein] synthase III (333 aa).

Active-site residues include cysteine 122 and histidine 258. Residues 259–263 are ACP-binding; it reads QANER. Residue asparagine 289 is part of the active site.

It belongs to the thiolase-like superfamily. FabH family. In terms of assembly, homodimer.

It localises to the cytoplasm. The enzyme catalyses butanoyl-CoA + malonyl-[ACP] + H(+) = 3-oxohexanoyl-[ACP] + CO2 + CoA. It carries out the reaction malonyl-[ACP] + acetyl-CoA + H(+) = 3-oxobutanoyl-[ACP] + CO2 + CoA. The catalysed reaction is 2-methylpropanoyl-CoA + malonyl-[ACP] + H(+) = 4-methyl-3-oxopentanoyl-[ACP] + CO2 + CoA. It functions in the pathway lipid metabolism; fatty acid biosynthesis. Inhibited by thiolactomycin. Catalyzes the condensation reaction of fatty acid synthesis by the addition to an acyl acceptor of two carbons from malonyl-ACP. Catalyzes the first condensation reaction which initiates fatty acid synthesis and may therefore play a role in governing the total rate of fatty acid production. Possesses both acetoacetyl-ACP synthase and acetyl transacylase activities. Utilizes both straight and branched-chain acyl-CoAs. The order of reactivity with the various acyl-CoA substrates at saturation is butanoyl-CoA &gt; acetyl-CoA &gt; 2-methylpropanoyl-CoA (or isobutyryl-CoA). Not involved in tetracenomycin C (TCM C) biosynthesis. The sequence is that of Beta-ketoacyl-[acyl-carrier-protein] synthase III (fabH) from Streptomyces glaucescens.